The sequence spans 148 residues: UPF0540 protein At1g62000 (148 aa).

The N-terminal stretch at 1–21 (MNATKFVVLLVIGILCAIVTA) is a signal peptide. The span at 123–132 (RANGKVASAS) shows a compositional bias: low complexity. The interval 123–148 (RANGKVASASRVKGSSEKKKGKGKKD) is disordered.

It belongs to the UPF0540 family.

The protein is UPF0540 protein At1g62000 of Arabidopsis thaliana (Mouse-ear cress).